The chain runs to 209 residues: Thymidylate kinase (209 aa).

10 to 17 serves as a coordination point for ATP; the sequence is GLDGAGKS.

This sequence belongs to the thymidylate kinase family.

It carries out the reaction dTMP + ATP = dTDP + ADP. In terms of biological role, phosphorylation of dTMP to form dTDP in both de novo and salvage pathways of dTTP synthesis. This Francisella tularensis subsp. tularensis (strain FSC 198) protein is Thymidylate kinase.